The following is a 180-amino-acid chain: Translation initiation factor IF-3 (180 aa).

The protein belongs to the IF-3 family. In terms of assembly, monomer.

It is found in the cytoplasm. Functionally, IF-3 binds to the 30S ribosomal subunit and shifts the equilibrium between 70S ribosomes and their 50S and 30S subunits in favor of the free subunits, thus enhancing the availability of 30S subunits on which protein synthesis initiation begins. The sequence is that of Translation initiation factor IF-3 from Shewanella baltica (strain OS223).